A 355-amino-acid polypeptide reads, in one-letter code: Natterin-1 (355 aa).

Residues 1 to 18 (MIPSVLLVTLLLLSWTSA) form the signal peptide. The propeptide occupies 19–27 (EKDLKVRVA).

The protein belongs to the natterin family. Contains 4 disulfide bonds. Expressed by the venom gland.

The protein localises to the secreted. Its activity is regulated as follows. Inhibited by tissue-kallikrein inhibitor TKI and trasylol. Plasma kallikrein inhibitor PKSI527 and classical inhibitors of serine-, metallo-, thiol- or aspartate-peptidases evokes a minor inhibition of the peptide digestion. Its function is as follows. Shows nociceptive, edema-inducing and kininogenase activity with release of kallidin from low molecular weight kininogen. The cleavage occurs at Met-Lys bonds. The polypeptide is Natterin-1 (Thalassophryne nattereri (Copper Joe toadfish)).